Here is a 253-residue protein sequence, read N- to C-terminus: Ditrans,polycis-undecaprenyl-diphosphate synthase ((2E,6E)-farnesyl-diphosphate specific) (253 aa).

Asp26 is an active-site residue. Asp26 provides a ligand contact to Mg(2+). Residues 27–30 (GNGR), Trp31, Arg39, His43, and 71–73 (SSE) contribute to the substrate site. Asn74 acts as the Proton acceptor in catalysis. Residues Trp75, Arg77, and Arg194 each contribute to the substrate site. Mg(2+) is bound at residue His199. Residue 200 to 202 (RIS) participates in substrate binding. Glu213 serves as a coordination point for Mg(2+).

The protein belongs to the UPP synthase family. In terms of assembly, homodimer. Requires Mg(2+) as cofactor.

The catalysed reaction is 8 isopentenyl diphosphate + (2E,6E)-farnesyl diphosphate = di-trans,octa-cis-undecaprenyl diphosphate + 8 diphosphate. In terms of biological role, catalyzes the sequential condensation of isopentenyl diphosphate (IPP) with (2E,6E)-farnesyl diphosphate (E,E-FPP) to yield (2Z,6Z,10Z,14Z,18Z,22Z,26Z,30Z,34E,38E)-undecaprenyl diphosphate (di-trans,octa-cis-UPP). UPP is the precursor of glycosyl carrier lipid in the biosynthesis of bacterial cell wall polysaccharide components such as peptidoglycan and lipopolysaccharide. This chain is Ditrans,polycis-undecaprenyl-diphosphate synthase ((2E,6E)-farnesyl-diphosphate specific), found in Shigella flexneri.